We begin with the raw amino-acid sequence, 121 residues long: Homeobox protein HD-6 (121 aa).

The segment at residues 28 to 87 (PKRSRIQLHDWQSMLLEHSFRMNPYPDRIEKYNLFLKTKIPMKNVKIWFQNRRAREKSFY) is a DNA-binding region (homeobox).

It is found in the nucleus. This chain is Homeobox protein HD-6 (HD-6), found in Encephalitozoon cuniculi (strain GB-M1) (Microsporidian parasite).